A 365-amino-acid chain; its full sequence is Probable ethanolamine-phosphate cytidylyltransferase (365 aa).

A disordered region spans residues glutamate 344–alanine 365. The segment covering alanine 355 to alanine 365 has biased composition (polar residues).

It belongs to the cytidylyltransferase family.

It catalyses the reaction phosphoethanolamine + CTP + H(+) = CDP-ethanolamine + diphosphate. Its pathway is phospholipid metabolism; phosphatidylethanolamine biosynthesis; phosphatidylethanolamine from ethanolamine: step 2/3. The chain is Probable ethanolamine-phosphate cytidylyltransferase from Schizosaccharomyces pombe (strain 972 / ATCC 24843) (Fission yeast).